A 448-amino-acid chain; its full sequence is UDP-N-acetylmuramoylalanine--D-glutamate ligase (448 aa).

112–118 serves as a coordination point for ATP; sequence GSNAKST.

It belongs to the MurCDEF family.

The protein resides in the cytoplasm. It catalyses the reaction UDP-N-acetyl-alpha-D-muramoyl-L-alanine + D-glutamate + ATP = UDP-N-acetyl-alpha-D-muramoyl-L-alanyl-D-glutamate + ADP + phosphate + H(+). Its pathway is cell wall biogenesis; peptidoglycan biosynthesis. In terms of biological role, cell wall formation. Catalyzes the addition of glutamate to the nucleotide precursor UDP-N-acetylmuramoyl-L-alanine (UMA). This chain is UDP-N-acetylmuramoylalanine--D-glutamate ligase, found in Acinetobacter baumannii (strain ACICU).